Consider the following 492-residue polypeptide: Heat shock factor protein 4 (492 aa).

The DNA-binding element occupies 17 to 121 (VPAFLGKLWA…QLLERVRRKV (105 aa)). A hydrophobic repeat HR-A/B region spans residues 129–203 (GRWRPEDLGR…GPLQAGPSNA (75 aa)). An interactions with DUSP26, MAPK1 and MAPK2 region spans residues 245–322 (LPETNLGLSP…ECDFCVTAPP (78 aa)). Residues 246–285 (PETNLGLSPHRARGPIISDIPEDSPSPEGTRLSPSSDGRR) form a disordered region. Lys-293 is covalently cross-linked (Glycyl lysine isopeptide (Lys-Gly) (interchain with G-Cter in SUMO)). Residue Ser-298 is modified to Phosphoserine. The disordered stretch occupies residues 337–400 (GSFSPEGPRN…PAGPLDVLGP (64 aa)). The segment at 364–389 (LGLESGDRSPESLLPPMLLQPPQESV) is hydrophobic repeat HR-C. Low complexity predominate over residues 374-388 (ESLLPPMLLQPPQES).

The protein belongs to the HSF family. In terms of assembly, homotrimer. Exhibits constitutive DNA binding and forms trimers even in the absence of stress. Interacts with ALKBH4, DUSP26, MAPK1, MAPK2, MAPK8 and MAP kinase p38. Post-translationally, phosphorylated mainly on serine residues. Phosphorylation on Ser-298 promotes sumoylation on Lys-293. Isoform HSF4B is constitutively sumoylated. Sumoylation represses the transcriptional activity and is promoted by phosphorylation on Ser-298. HSFA is not sumoylated. Expressed in heart, skeletal muscle, eye and brain, and at much lower levels in some other tissues.

It localises to the nucleus. In terms of biological role, heat-shock transcription factor that specifically binds heat shock promoter elements (HSE). Required for denucleation and organelle rupture and degradation that occur during eye lens terminal differentiation, when fiber cells that compose the lens degrade all membrane-bound organelles in order to provide lens with transparency to allow the passage of light. In this process, may regulate denucleation of lens fiber cells in part by activating DNASE2B transcription. May be involved in DNA repair through the transcriptional regulation of RAD51. May up-regulate p53/TP53 protein in eye lens fiber cells, possibly through protein stabilization. In the eye lens, controls the expression of alpha-crystallin B chain/CRYAB and consequently may be involved in the regulation of lysosomal acidification. Transcriptional repressor. Functionally, transcriptional activator. In Homo sapiens (Human), this protein is Heat shock factor protein 4 (HSF4).